The sequence spans 327 residues: Phenylalanine--tRNA ligase alpha subunit (327 aa).

Glu252 is a binding site for Mg(2+).

The protein belongs to the class-II aminoacyl-tRNA synthetase family. Phe-tRNA synthetase alpha subunit type 1 subfamily. As to quaternary structure, tetramer of two alpha and two beta subunits. Requires Mg(2+) as cofactor.

Its subcellular location is the cytoplasm. It carries out the reaction tRNA(Phe) + L-phenylalanine + ATP = L-phenylalanyl-tRNA(Phe) + AMP + diphosphate + H(+). This chain is Phenylalanine--tRNA ligase alpha subunit, found in Photobacterium profundum (strain SS9).